We begin with the raw amino-acid sequence, 364 residues long: Cobalt-precorrin-5B C(1)-methyltransferase (364 aa).

This sequence belongs to the CbiD family.

It catalyses the reaction Co-precorrin-5B + S-adenosyl-L-methionine = Co-precorrin-6A + S-adenosyl-L-homocysteine. It functions in the pathway cofactor biosynthesis; adenosylcobalamin biosynthesis; cob(II)yrinate a,c-diamide from sirohydrochlorin (anaerobic route): step 6/10. Catalyzes the methylation of C-1 in cobalt-precorrin-5B to form cobalt-precorrin-6A. In Pseudomonas putida (strain GB-1), this protein is Cobalt-precorrin-5B C(1)-methyltransferase.